A 161-amino-acid chain; its full sequence is MPSFDVISKVSYPEFDNALANCLREIGNRFDFKGLHISIERKDKIITTLAPDELKLKQVNELLQVHLIRRKVDPRVLSIKNSENAAGSSIRQVSELQEGISQENAKKIITEIKKLKLKIQIKIQGEELRAEGKKRDDLQEAMSAITAIDIGLPVEFVNFRD.

It belongs to the YajQ family.

Nucleotide-binding protein. The chain is Nucleotide-binding protein SAR11_0692 from Pelagibacter ubique (strain HTCC1062).